Reading from the N-terminus, the 82-residue chain is Large ribosomal subunit protein bL31 (82 aa).

It belongs to the bacterial ribosomal protein bL31 family. Type A subfamily. As to quaternary structure, part of the 50S ribosomal subunit.

Functionally, binds the 23S rRNA. This Rippkaea orientalis (strain PCC 8801 / RF-1) (Cyanothece sp. (strain PCC 8801)) protein is Large ribosomal subunit protein bL31.